Reading from the N-terminus, the 337-residue chain is GTP 3',8-cyclase (337 aa).

One can recognise a Radical SAM core domain in the interval 18 to 242; that stretch reads NFGRRFHYLR…DKADILDGPA (225 aa). Arginine 27 contacts GTP. Positions 34 and 38 each coordinate [4Fe-4S] cluster. Tyrosine 40 is an S-adenosyl-L-methionine binding site. Residue cysteine 41 coordinates [4Fe-4S] cluster. A GTP-binding site is contributed by arginine 76. Glycine 80 is an S-adenosyl-L-methionine binding site. A GTP-binding site is contributed by threonine 107. Serine 131 contributes to the S-adenosyl-L-methionine binding site. Position 168 (lysine 168) interacts with GTP. S-adenosyl-L-methionine is bound at residue methionine 202. [4Fe-4S] cluster-binding residues include cysteine 265 and cysteine 268. Position 270-272 (270-272) interacts with GTP; that stretch reads RLR. Cysteine 282 is a [4Fe-4S] cluster binding site.

Belongs to the radical SAM superfamily. MoaA family. In terms of assembly, monomer and homodimer. [4Fe-4S] cluster serves as cofactor.

The enzyme catalyses GTP + AH2 + S-adenosyl-L-methionine = (8S)-3',8-cyclo-7,8-dihydroguanosine 5'-triphosphate + 5'-deoxyadenosine + L-methionine + A + H(+). It functions in the pathway cofactor biosynthesis; molybdopterin biosynthesis. Its function is as follows. Catalyzes the cyclization of GTP to (8S)-3',8-cyclo-7,8-dihydroguanosine 5'-triphosphate. The protein is GTP 3',8-cyclase of Shewanella denitrificans (strain OS217 / ATCC BAA-1090 / DSM 15013).